The primary structure comprises 155 residues: Endoribonuclease YbeY (155 aa).

Zn(2+) is bound by residues histidine 114, histidine 118, and histidine 124.

Belongs to the endoribonuclease YbeY family. Zn(2+) serves as cofactor.

The protein localises to the cytoplasm. Its function is as follows. Single strand-specific metallo-endoribonuclease involved in late-stage 70S ribosome quality control and in maturation of the 3' terminus of the 16S rRNA. In Proteus mirabilis (strain HI4320), this protein is Endoribonuclease YbeY.